Here is a 189-residue protein sequence, read N- to C-terminus: CASP-like protein 1U2 (189 aa).

The Cytoplasmic portion of the chain corresponds to M1 to K24. The chain crosses the membrane as a helical span at residues A25–M45. The Extracellular segment spans residues A46–P71. The chain crosses the membrane as a helical span at residues F72–V92. Over Q93–V109 the chain is Cytoplasmic. A helical membrane pass occupies residues V110–F130. At A131–K158 the chain is on the extracellular side. Residues I159–L179 traverse the membrane as a helical segment. Residues P180–S189 are Cytoplasmic-facing.

Belongs to the Casparian strip membrane proteins (CASP) family. In terms of assembly, homodimer and heterodimers.

The protein resides in the cell membrane. The sequence is that of CASP-like protein 1U2 from Sorghum bicolor (Sorghum).